Consider the following 177-residue polypeptide: Acireductone dioxygenase (177 aa).

Fe(2+)-binding residues include H97, H99, E103, and H141. Residues H97, H99, E103, and H141 each contribute to the Ni(2+) site.

This sequence belongs to the acireductone dioxygenase (ARD) family. As to quaternary structure, monomer. Fe(2+) serves as cofactor. The cofactor is Ni(2+).

The enzyme catalyses 1,2-dihydroxy-5-(methylsulfanyl)pent-1-en-3-one + O2 = 3-(methylsulfanyl)propanoate + CO + formate + 2 H(+). It carries out the reaction 1,2-dihydroxy-5-(methylsulfanyl)pent-1-en-3-one + O2 = 4-methylsulfanyl-2-oxobutanoate + formate + 2 H(+). It functions in the pathway amino-acid biosynthesis; L-methionine biosynthesis via salvage pathway; L-methionine from S-methyl-5-thio-alpha-D-ribose 1-phosphate: step 5/6. Its function is as follows. Catalyzes 2 different reactions between oxygen and the acireductone 1,2-dihydroxy-3-keto-5-methylthiopentene (DHK-MTPene) depending upon the metal bound in the active site. Fe-containing acireductone dioxygenase (Fe-ARD) produces formate and 2-keto-4-methylthiobutyrate (KMTB), the alpha-ketoacid precursor of methionine in the methionine recycle pathway. Ni-containing acireductone dioxygenase (Ni-ARD) produces methylthiopropionate, carbon monoxide and formate, and does not lie on the methionine recycle pathway. The protein is Acireductone dioxygenase of Leptospira biflexa serovar Patoc (strain Patoc 1 / ATCC 23582 / Paris).